Here is a 382-residue protein sequence, read N- to C-terminus: Galactokinase (382 aa).

Residue 34–37 participates in substrate binding; it reads EHTD. Residue 124-130 participates in ATP binding; the sequence is GAGLSSS. Mg(2+)-binding residues include serine 130 and glutamate 162. The Proton acceptor role is filled by aspartate 174. A substrate-binding site is contributed by tyrosine 223.

It belongs to the GHMP kinase family. GalK subfamily.

The protein localises to the cytoplasm. The catalysed reaction is alpha-D-galactose + ATP = alpha-D-galactose 1-phosphate + ADP + H(+). Its pathway is carbohydrate metabolism; galactose metabolism. Catalyzes the transfer of the gamma-phosphate of ATP to D-galactose to form alpha-D-galactose-1-phosphate (Gal-1-P). This chain is Galactokinase, found in Salmonella arizonae (strain ATCC BAA-731 / CDC346-86 / RSK2980).